The following is a 629-amino-acid chain: Sushi domain-containing protein 5 (629 aa).

The signal sequence occupies residues 1-35 (MTAEGPSPPARWHRRLPGLWAAALLLLGLPRLSVR). The Extracellular portion of the chain corresponds to 36–574 (ADGKFFVLES…DGCPGLSRGP (539 aa)). In terms of domain architecture, Link spans 39–134 (KFFVLESQNG…GGTYSALCIK (96 aa)). Disulfide bonds link Cys61/Cys132, Cys140/Cys184, and Cys167/Cys197. Residues 138–199 (KPCGDPPSFP…WYGLVQACGK (62 aa)) enclose the Sushi domain. Positions 225–249 (EDSRTEADEDRGQGDSSEEAPKQDR) are enriched in basic and acidic residues. 2 disordered regions span residues 225–252 (EDSR…RLVS) and 344–403 (DGPS…GLDE). The helical transmembrane segment at 575–595 (VIATIVTVLCLLLLLAGVGMV) threads the bilayer. Topologically, residues 596–629 (WGYRKCQHKSSVYKLNVGQRQARHYHQQIEMEKV) are cytoplasmic.

It is found in the membrane. This is Sushi domain-containing protein 5 (SUSD5) from Homo sapiens (Human).